A 135-amino-acid polypeptide reads, in one-letter code: Large ribosomal subunit protein eL32 (135 aa).

A Glycyl lysine isopeptide (Lys-Gly) (interchain with G-Cter in SUMO2) cross-link involves residue lysine 9. Lysine 50 bears the N6-succinyllysine mark. Serine 62 is subject to Phosphoserine.

It belongs to the eukaryotic ribosomal protein eL32 family. As to quaternary structure, component of the large ribosomal subunit.

Its subcellular location is the cytoplasm. Functionally, component of the large ribosomal subunit. The ribosome is a large ribonucleoprotein complex responsible for the synthesis of proteins in the cell. In Macaca fascicularis (Crab-eating macaque), this protein is Large ribosomal subunit protein eL32 (RPL32).